The following is a 718-amino-acid chain: Myeloperoxidase (718 aa).

A signal peptide spans 1–15 (MKLLLALAGLLAPLA). The propeptide occupies 16-138 (MLQTSNGATP…SSGCAYQDVR (123 aa)). Asn113 carries an N-linked (GlcNAc...) asparagine glycan. A disulfide bridge connects residues Cys141 and Cys154. Residue Asp234 coordinates heme b. His235 acts as the Proton acceptor in catalysis. A Ca(2+)-binding site is contributed by Asp236. Disulfide bonds link Cys255/Cys265 and Cys259/Cys283. A Cysteine sulfenic acid (-SOH) modification is found at Cys290. Asn297 carries an N-linked (GlcNAc...) asparagine glycan. Residues Thr308, Phe310, Asp312, and Ser314 each coordinate Ca(2+). Asn329 and Asn365 each carry an N-linked (GlcNAc...) asparagine glycan. Cys361 and Cys372 form a disulfide bridge. Glu382 and Met383 together coordinate heme b. Asn457 is a glycosylation site (N-linked (GlcNAc...) asparagine). His476 lines the heme b pocket. Cystine bridges form between Cys580–Cys637 and Cys678–Cys704. A glycan (N-linked (GlcNAc...) asparagine) is linked at Asn711.

It belongs to the peroxidase family. XPO subfamily. Homodimer; disulfide-linked. Each monomer consists of a light and a heavy chain. Found in a complex with CP and LTF; interacts directly with CP, which protects CP antioxidant properties by MPO. The cofactor is Ca(2+). Requires heme b as cofactor.

It localises to the lysosome. The enzyme catalyses chloride + H2O2 + H(+) = hypochlorous acid + H2O. Its function is as follows. Part of the host defense system of polymorphonuclear leukocytes. It is responsible for microbicidal activity against a wide range of organisms. In the stimulated PMN, MPO catalyzes the production of hypohalous acids, primarily hypochlorous acid in physiologic situations, and other toxic intermediates that greatly enhance PMN microbicidal activity. Mediates the proteolytic cleavage of alpha-1-microglobulin to form t-alpha-1-microglobulin, which potently inhibits oxidation of low density lipoprotein particles and limits vascular damage. In Mus musculus (Mouse), this protein is Myeloperoxidase (Mpo).